Consider the following 301-residue polypeptide: Acetylglutamate kinase (301 aa).

Residues 72-73 (GG), Arg-94, and Asn-199 each bind substrate.

The protein belongs to the acetylglutamate kinase family. ArgB subfamily.

The protein localises to the cytoplasm. It catalyses the reaction N-acetyl-L-glutamate + ATP = N-acetyl-L-glutamyl 5-phosphate + ADP. It functions in the pathway amino-acid biosynthesis; L-arginine biosynthesis; N(2)-acetyl-L-ornithine from L-glutamate: step 2/4. Functionally, catalyzes the ATP-dependent phosphorylation of N-acetyl-L-glutamate. The protein is Acetylglutamate kinase of Bartonella henselae (strain ATCC 49882 / DSM 28221 / CCUG 30454 / Houston 1) (Rochalimaea henselae).